The chain runs to 215 residues: S-crystallin 2 (215 aa).

Positions 2–80 (PSYTLNYFNH…YLAREFGFHG (79 aa)) constitute a GST N-terminal domain. The region spanning 82 to 215 (NNMEMARVEY…YLKKRSSTEF (134 aa)) is the GST C-terminal domain.

It belongs to the GST superfamily. Lens.

Its function is as follows. S-crystallins are structural components of squids and octopi eye lens. Contains relatively little if any GST activity. In Enteroctopus dofleini (North Pacific giant octopus), this protein is S-crystallin 2.